Consider the following 60-residue polypeptide: Sec-independent protein translocase protein TatA (60 aa).

A helical membrane pass occupies residues 1–21 (MAGLGVTELLIILAIVIVLFG).

Belongs to the TatA/E family. Forms a complex with TatC.

The protein resides in the cell membrane. In terms of biological role, part of the twin-arginine translocation (Tat) system that transports large folded proteins containing a characteristic twin-arginine motif in their signal peptide across membranes. TatA could form the protein-conducting channel of the Tat system. In Herpetosiphon aurantiacus (strain ATCC 23779 / DSM 785 / 114-95), this protein is Sec-independent protein translocase protein TatA.